Consider the following 163-residue polypeptide: GPI-anchored protein LLG2 (163 aa).

The N-terminal stretch at 1 to 23 is a signal peptide; sequence MEISPYCLLSLLPIFLLSGFSLS. Asn-52 carries an N-linked (GlcNAc...) asparagine glycan. Ser-135 is lipidated: GPI-anchor amidated serine. Residues 136–163 constitute a propeptide, removed in mature form; that stretch reads DSIPRASTTASLAVLSTFLVLCLLFLSS.

As to expression, expressed in pollen, pollen tubes, sporophytic pistil tissues, in the early stages of female gametophyte development, and in unfertilized, mature ovules.

It localises to the cell membrane. In Arabidopsis thaliana (Mouse-ear cress), this protein is GPI-anchored protein LLG2.